A 1372-amino-acid chain; its full sequence is MEATDQEVMLEGREDLMSTSATSSTNGGDTNGCGKKLSVTSPDPTPYVTKQRVTRPTPPAPSKNPMQFVQIKPCNLYQTAQEQLKKAEEVKKLKEVKKEEPEEWQNNLDNWKSSRRKRVEHIIDRAVETKKLELEEHDRLRRKSKTFTEMMEERAERGGPRGRAKLASLAVYNEDETNDLSDLGIGTSSASGKSSLSGDYDNNSVMSDHAAELDKAIGAASSVAAGVTAQNVDEQLNHINRNGSNGNHGNGAAVGQTGPSNSSKSAGRQYISSPGYDTSSSNAQASSPDLCEYTYEGAIQDYKQRVQRASSNGNGNANGKLIGEHIAYPTRRGSKIEDRLSGFEVTSPSDTQEGVEKQKVDVPKVDISKRKEIFEQAKAEVSNGGAPAAPKLVFRDGLTNGNSATTAPKSEVRRLSGDISSIRDRMQSLEQQRKAFSSSKSVDVPVPPLKQRLNSLQQSVAKEEQKKPPLVALIDARQLEIMRGEEERMRQQQQKEKHSPSQTTLCAPKPAPPALIIEEPPVADTNDDSGIQEDTADELQQQQQLNAAIAALALEERQLEEAANAVNQIEAEFDELTDLHPSPLPPSPALPAVQQSLQQPTVAQVPAQAVNQAAAPPLRDMEFSVSCTNNFIEPAKISPCDVNVVAASAVSVSKSGPTPNPTSTPNMVSSSPNCNLRRKPSNEMVHHRNLLKMFKETFQNDDDLKEVCEIVTSPGQFTQIIDFSKRPSNPPIPIPTLLPTSTPIPTQIPRPLGKPPMSPKAVRLASSPKGHINPLSSPTNSGFSPPQFSINGRVEIFNSRQLDKPPTPPAPPKKTVRSEHPLKEAVPSPEVVMCAPPMTIVDPDELPKPNTVKALSNCFSQSDSKSLTSPIMSPKPLPSGRIPQITPPASPKPPKRVQLDEVDRSSGDYAPVVGQTKAIVHTPPSKINARANQTLDPLAPNDSLCLHTSSPSEIPSLKACSPNESSLFKLASSRPTSPSVDVASCQKFLNREAPKDIQLAEEDRKRMDQFAVEEMPCDKIDVTKSPQPNTGFQIVTEDLVKKCDGKNISEAVRDLDVPPSQEDIALCAGLLDCLAPAQEPICDSIDVRNGPVPATGFQDISEEEVKKCEKHNKNYVITNRPSSPIGSVRAAHSKALMDTCEQIIAEERKASSQMMKTSLPESVEKPSTPLPGRKSKIPIPKPCCISASGTDSISRAGYVPTAPSHLSGSAQQPLIARTHVVETEIKVKEISPPSIPKTPEQTQLHASPTKEKKAKNIFDFLRRNFGHQEEPQHHSTLNETLEKKVVLTSTKSGVDVVNADEFVRVDNSKFYLASELEDVPVPPPLPKTPAPVNIEIRKKITTNEILEENTTEQALTQEISDLLDDEIMKLEN.

Positions 1–67 are disordered; that stretch reads MEATDQEVML…PPAPSKNPMQ (67 aa). Over residues 17–28 the composition is skewed to polar residues; the sequence is MSTSATSSTNGG. A coiled-coil region spans residues 75 to 143; sequence NLYQTAQEQL…LEEHDRLRRK (69 aa). Disordered stretches follow at residues 178–199, 238–287, 380–414, 427–447, and 486–531; these read NDLS…LSGD, HINR…QASS, EVSN…EVRR, QSLE…VPVP, and EERM…DSGI. Composition is skewed to low complexity over residues 184–198 and 238–251; these read GIGT…SLSG and HINR…HGNG. Polar residues-rich tracts occupy residues 257–287 and 399–408; these read TGPS…QASS and TNGNSATTAP. A coiled-coil region spans residues 409-438; that stretch reads KSEVRRLSGDISSIRDRMQSLEQQRKAFSS. Positions 486–499 are enriched in basic and acidic residues; that stretch reads EERMRQQQQKEKHS. The segment covering 514–523 has biased composition (low complexity); sequence ALIIEEPPVA. Positions 539–580 form a coiled coil; sequence LQQQQQLNAAIAALALEERQLEEAANAVNQIEAEFDELTDLH. The span at 652–673 shows a compositional bias: low complexity; sequence VSKSGPTPNPTSTPNMVSSSPN. 5 disordered regions span residues 652-679, 799-820, 860-897, 1151-1181, and 1231-1250; these read VSKS…LRRK, SRQL…RSEH, SQSD…PKRV, SSQM…PIPK, and SPPS…SPTK. 2 stretches are compositionally biased toward polar residues: residues 860 to 871 and 1151 to 1160; these read SQSDSKSLTSPI and SSQMMKTSLP.

This is an uncharacterized protein from Drosophila melanogaster (Fruit fly).